A 320-amino-acid polypeptide reads, in one-letter code: Cytochrome f (320 aa).

A signal peptide spans Met-1–Ala-35. Residues Tyr-36, Cys-56, Cys-59, and His-60 each contribute to the heme site. The helical transmembrane segment at Ile-286–Lys-306 threads the bilayer.

It belongs to the cytochrome f family. As to quaternary structure, the 4 large subunits of the cytochrome b6-f complex are cytochrome b6, subunit IV (17 kDa polypeptide, petD), cytochrome f and the Rieske protein, while the 4 small subunits are PetG, PetL, PetM and PetN. The complex functions as a dimer. It depends on heme as a cofactor.

It is found in the plastid. Its subcellular location is the chloroplast thylakoid membrane. Functionally, component of the cytochrome b6-f complex, which mediates electron transfer between photosystem II (PSII) and photosystem I (PSI), cyclic electron flow around PSI, and state transitions. This Dioscorea elephantipes (Elephant's foot yam) protein is Cytochrome f.